The sequence spans 207 residues: Small ribosomal subunit protein uS4c (207 aa).

Residues Met92 to Lys153 enclose the S4 RNA-binding domain.

Belongs to the universal ribosomal protein uS4 family. As to quaternary structure, part of the 30S ribosomal subunit. Contacts protein S5. The interaction surface between S4 and S5 is involved in control of translational fidelity.

It localises to the plastid. The protein localises to the chloroplast. In terms of biological role, one of the primary rRNA binding proteins, it binds directly to 16S rRNA where it nucleates assembly of the body of the 30S subunit. With S5 and S12 plays an important role in translational accuracy. The protein is Small ribosomal subunit protein uS4c (rps4) of Equisetum laevigatum (Smooth horsetail).